A 167-amino-acid polypeptide reads, in one-letter code: Large ribosomal subunit protein uL10 (167 aa).

The protein belongs to the universal ribosomal protein uL10 family. In terms of assembly, part of the ribosomal stalk of the 50S ribosomal subunit. The N-terminus interacts with L11 and the large rRNA to form the base of the stalk. The C-terminus forms an elongated spine to which L12 dimers bind in a sequential fashion forming a multimeric L10(L12)X complex.

Its function is as follows. Forms part of the ribosomal stalk, playing a central role in the interaction of the ribosome with GTP-bound translation factors. The sequence is that of Large ribosomal subunit protein uL10 from Cytophaga hutchinsonii (strain ATCC 33406 / DSM 1761 / CIP 103989 / NBRC 15051 / NCIMB 9469 / D465).